The following is a 147-amino-acid chain: Large ribosomal subunit protein mL40 (147 aa).

The transit peptide at 1–26 (MLAQTFKKPHRAVLEQVSGTTVFIRN) directs the protein to the mitochondrion.

This sequence belongs to the mitochondrion-specific ribosomal protein mL40 family. In terms of assembly, component of the mitochondrial large ribosomal subunit (mt-LSU). Mature yeast 74S mitochondrial ribosomes consist of a small (37S) and a large (54S) subunit. The 37S small subunit contains a 15S ribosomal RNA (15S mt-rRNA) and 34 different proteins. The 54S large subunit contains a 21S rRNA (21S mt-rRNA) and 46 different proteins.

The protein resides in the mitochondrion. In terms of biological role, component of the mitochondrial ribosome (mitoribosome), a dedicated translation machinery responsible for the synthesis of mitochondrial genome-encoded proteins, including at least some of the essential transmembrane subunits of the mitochondrial respiratory chain. The mitoribosomes are attached to the mitochondrial inner membrane and translation products are cotranslationally integrated into the membrane. This Saccharomyces cerevisiae (strain ATCC 204508 / S288c) (Baker's yeast) protein is Large ribosomal subunit protein mL40 (MRPL28).